A 301-amino-acid polypeptide reads, in one-letter code: B3 domain-containing protein At5g18090 (301 aa).

Positions 18–113 (FFKILRSADL…CFTVDIYQID (96 aa)) form a DNA-binding region, TF-B3 1. Disordered regions lie at residues 123 to 142 (SATI…NNIY) and 153 to 194 (SWSE…KMKV). Positions 133–142 (NKREQRNNIY) are enriched in basic and acidic residues. The TF-B3 2 DNA-binding region spans 209–301 (VPEFTLTIKK…PTEMLVRVSK (93 aa)).

It is found in the nucleus. In Arabidopsis thaliana (Mouse-ear cress), this protein is B3 domain-containing protein At5g18090.